The following is a 473-amino-acid chain: FAD-dependent oxidoreductase dpchF (473 aa).

The signal sequence occupies residues 1–21; it reads MKLSFIASPVWALALAQFAAA. N98, N128, N181, N262, and N330 each carry an N-linked (GlcNAc...) asparagine glycan.

This sequence belongs to the beta-cyclopiazonate dehydrogenase family. FAD is required as a cofactor.

It functions in the pathway secondary metabolite biosynthesis; terpenoid biosynthesis. FAD-dependent oxidoreductase; part of the gene cluster that mediates the biosynthesis of the diterpenoid pyrones higginsianins A and B. The first step of the pathway is the synthesis of the alpha-pyrone moiety by the polyketide synthase dpchA via condensation of one acetyl-CoA starter unit with 3 malonyl-CoA units and 2 methylations. The alpha-pyrone is then combined with geranylgeranyl pyrophosphate (GGPP) formed by the GGPP synthase dpchD through the action of the prenyltransferase dpchC to yield a linear alpha-pyrone diterpenoid. Subsequent steps in the diterpenoid pyrone biosynthetic pathway involve the decalin core formation, which is initiated by the epoxidation of the C10-C11 olefin by the FAD-dependent oxidoreductase dpchE, and is followed by a cyclization cascade catalyzed by the terpene cyclase dpchB. The short chain dehydrogenase/reductase dpchG then oxidizes the 8S hydroxy group to a ketone and the short chain dehydrogenase/reductase dpchH reduces the ketone to the 8R hydroxy group to yield higginsianin B. Finally, the FAD-dependent oxidoreductase dpchF converts higginsianin B into higginsianin A. This is FAD-dependent oxidoreductase dpchF from Colletotrichum higginsianum (strain IMI 349063) (Crucifer anthracnose fungus).